The following is an 81-amino-acid chain: ATP synthase subunit c (81 aa).

The next 2 membrane-spanning stretches (helical) occupy residues 5-25 (IAAGALIGGGLIMAGGAIGAG) and 57-77 (VGLVEAAYFINLAFMALFVFA).

This sequence belongs to the ATPase C chain family. In terms of assembly, F-type ATPases have 2 components, F(1) - the catalytic core - and F(0) - the membrane proton channel. F(1) has five subunits: alpha(3), beta(3), gamma(1), delta(1), epsilon(1). F(0) has three main subunits: a(1), b(2) and c(10-14). The alpha and beta chains form an alternating ring which encloses part of the gamma chain. F(1) is attached to F(0) by a central stalk formed by the gamma and epsilon chains, while a peripheral stalk is formed by the delta and b chains.

Its subcellular location is the cell membrane. Its function is as follows. F(1)F(0) ATP synthase produces ATP from ADP in the presence of a proton or sodium gradient. F-type ATPases consist of two structural domains, F(1) containing the extramembraneous catalytic core and F(0) containing the membrane proton channel, linked together by a central stalk and a peripheral stalk. During catalysis, ATP synthesis in the catalytic domain of F(1) is coupled via a rotary mechanism of the central stalk subunits to proton translocation. In terms of biological role, key component of the F(0) channel; it plays a direct role in translocation across the membrane. A homomeric c-ring of between 10-14 subunits forms the central stalk rotor element with the F(1) delta and epsilon subunits. The chain is ATP synthase subunit c from Mycobacterium marinum (strain ATCC BAA-535 / M).